The primary structure comprises 287 residues: Energy-coupling factor transporter ATP-binding protein EcfA1 (287 aa).

Residues 6-248 (IVAEGVSYAY…ADRIRALRLD (243 aa)) enclose the ABC transporter domain. 47 to 54 (GMNGSGKS) lines the ATP pocket.

The protein belongs to the ABC transporter superfamily. Energy-coupling factor EcfA family. As to quaternary structure, forms a stable energy-coupling factor (ECF) transporter complex composed of 2 membrane-embedded substrate-binding proteins (S component), 2 ATP-binding proteins (A component) and 2 transmembrane proteins (T component).

The protein localises to the cell membrane. ATP-binding (A) component of a common energy-coupling factor (ECF) ABC-transporter complex. Unlike classic ABC transporters this ECF transporter provides the energy necessary to transport a number of different substrates. The polypeptide is Energy-coupling factor transporter ATP-binding protein EcfA1 (Symbiobacterium thermophilum (strain DSM 24528 / JCM 14929 / IAM 14863 / T)).